An 86-amino-acid polypeptide reads, in one-letter code: Small ribosomal subunit protein bS20 (86 aa).

Belongs to the bacterial ribosomal protein bS20 family.

Functionally, binds directly to 16S ribosomal RNA. This is Small ribosomal subunit protein bS20 from Bifidobacterium adolescentis (strain ATCC 15703 / DSM 20083 / NCTC 11814 / E194a).